Here is a 1748-residue protein sequence, read N- to C-terminus: Anaphase-promoting complex subunit 1 (1748 aa).

Disordered regions lie at residues methionine 1–aspartate 24 and valine 1435–alanine 1479. A compositionally biased stretch (polar residues) spans valine 1435–asparagine 1450. A compositionally biased stretch (basic and acidic residues) spans serine 1451 to serine 1468. Serine 1462 is modified (phosphoserine).

This sequence belongs to the APC1 family. The APC/C is composed of at least 13 subunits that stay tightly associated throughout the cell cycle: APC1, APC2, APC4, APC5, APC9, APC11, CDC16, CDC23, CDC26, CDC27, DOC1, MND2 and SWM1. APC1 interacts directly with MND2.

It localises to the nucleus. It is found in the cytoplasm. Its subcellular location is the cytoskeleton. The protein localises to the spindle pole. The protein operates within protein modification; protein ubiquitination. In terms of biological role, component of the anaphase promoting complex/cyclosome (APC/C), a cell cycle-regulated E3 ubiquitin-protein ligase complex that controls progression through mitosis and the G1 phase of the cell cycle. The APC/C is thought to confer substrate specificity and, in the presence of ubiquitin-conjugating E2 enzymes, it catalyzes the formation of protein-ubiquitin conjugates that are subsequently degraded by the 26S proteasome. In early mitosis, the APC/C is activated by CDC20 and targets securin PDS1, the B-type cyclin CLB5, and other anaphase inhibitory proteins for proteolysis, thereby triggering the separation of sister chromatids at the metaphase-to-anaphase transition. In late mitosis and in G1, degradation of CLB5 allows activation of the APC/C by CDH1, which is needed to destroy CDC20 and the B-type cyclin CLB2 to allow exit from mitosis and creating the low CDK state necessary for cytokinesis and for reforming prereplicative complexes in G1 prior to another round of replication. This is Anaphase-promoting complex subunit 1 (APC1) from Saccharomyces cerevisiae (strain ATCC 204508 / S288c) (Baker's yeast).